The primary structure comprises 129 residues: Transcriptional activator protein (129 aa).

The segment covering 1–12 (MRSSSPSQPPSI) has biased composition (low complexity). The tract at residues 1–21 (MRSSSPSQPPSIKKAHRQAKR) is disordered. A Nuclear localization signal motif is present at residues 13 to 28 (KKAHRQAKRRAIRRRR). A zinc finger spans residues 33 to 50 (CGCSIYFHIDCTGHGFTH). Positions 84–114 (IHQNEDIPCTNTVQPQPEESVASPQSLPELP) are disordered. Over residues 92–109 (CTNTVQPQPEESVASPQS) the composition is skewed to polar residues. Residues 115 to 129 (SLDDFDDSFWVNLFK) form a transactivation region.

It belongs to the geminiviridae transcriptional activator protein family. In terms of assembly, monomer. Homodimer. Homooligomer. Self-interaction correlates with nuclear localization and efficient activation of transcription. Monomers suppress local silencing by interacting with and inactivating host adenosine kinase 2 (ADK2) in the cytoplasm. Interacts with and inhibits host SNF1 kinase. Binds to ssDNA. Post-translationally, phosphorylated.

Its subcellular location is the host nucleus. The protein localises to the host cytoplasm. In terms of biological role, strong activator of the late viral genes promoters. Enhances the expression of the capsid protein and nuclear shuttle protein. Acts as a suppressor of RNA-mediated gene silencing, also known as post-transcriptional gene silencing (PTGS), a mechanism of plant viral defense that limits the accumulation of viral RNAs. Suppresses the host RNA silencing by inhibiting adenosine kinase 2 (ADK2), a kinase involved in a general methylation pathway. Also suppresses the host basal defense by interacting with and inhibiting SNF1 kinase, a key regulator of cell metabolism implicated in innate antiviral defense. Determines pathogenicity. The protein is Transcriptional activator protein of Abutilon (Upland cotton).